The following is a 992-amino-acid chain: Tubulin glycylase 3A (992 aa).

Disordered regions lie at residues 1-54 (MQTR…NRVV) and 68-113 (QSDS…LGAP). The span at 7-26 (SEPHRSRDQVTDGDRNRDQP) shows a compositional bias: basic and acidic residues. The segment covering 39-49 (VTPPAAPPPTP) has biased composition (pro residues). The TTL domain maps to 295-645 (FKLTACVAFL…RRTDPKAELG (351 aa)). Residues 457-460 (QKYI), Lys470, and Asp472 contribute to the ATP site. 2 disordered regions span residues 746–766 (SLCS…TATP) and 791–828 (KRNT…PVES). Over residues 794–807 (TGGSLSGEQVQSTA) the composition is skewed to polar residues.

The protein resides in the cytoplasm. Its subcellular location is the cytoskeleton. Its function is as follows. Polylycylase which modifies alpha- and beta-tubulin, generating side chains of glycine on the gamma-carboxyl groups of specific glutamate residues within the C-terminal tail of alpha- and beta-tubulin. Involved both in the side-chain initiation and elongation steps of the polyglycylation reaction by adding a single glycine chain to generate monoglycine side chains and by elongating monoglycine side chains to polyglycine side chains. This Drosophila melanogaster (Fruit fly) protein is Tubulin glycylase 3A (TTLL3A).